The primary structure comprises 470 residues: Cytochrome P450 monooxygenase sirC (470 aa).

A helical membrane pass occupies residues 12-34 (LRGMVVGTIMLLCYRYGLALSIL). A glycan (N-linked (GlcNAc...) asparagine) is linked at asparagine 399. A heme-binding site is contributed by cysteine 410.

The protein belongs to the cytochrome P450 family. Heme serves as cofactor.

The protein localises to the membrane. Its pathway is mycotoxin biosynthesis. Functionally, cytochrome P450 monooxygenase; part of the gene cluster that mediates the biosynthesis of sirodesmin PL, an epipolythiodioxopiperazine (ETP) characterized by a disulfide bridged cyclic dipeptide and that acts as a phytotoxin which is involved in the blackleg didease of canola. SirD catalyzes the O-prenylation of L-tyrosine (L-Tyr) in the presence of dimethylallyl diphosphate (DMAPP) to yield 4-O-dimethylallyl-L-Tyr, and therefore represents probably the first pathway-specific enzyme in the biosynthesis of sirodesmin PL. 4-O-dimethylallyl-L-Tyr, then undergoes condensation with L-Ser in a reaction catalyzed by the non-ribosomal peptide synthase sirP to form the diketopiperazine (DKP) backbone. Further bishydroxylation of the DKP performed by the cytochrome P450 monooxygenase sirC leads to the production of the intermediate phomamide. This step is essential to form the reactive thiol group required for toxicity of sirodesmin PL. The next steps of sirodesmin biosynthesis are not well understood yet, but some predictions could be made from intermediate compounds identification. Phomamide is converted into phomalizarine via oxidation, probably by sirT. Further oxidation, methylation (by sirM or sirN) and reduction steps convert phomalizarine to deacetyl sirodesmin. Finally, acetyltransferase sirH probably acetylates deacetyl sirodesmin to produce sirodesmin PL. The protein is Cytochrome P450 monooxygenase sirC of Leptosphaeria maculans (Blackleg fungus).